We begin with the raw amino-acid sequence, 43 residues long: Protein PsbN (43 aa).

Residues 5–27 traverse the membrane as a helical segment; it reads TLVAIFISGSLVSFTGYALYTAF.

Belongs to the PsbN family.

Its subcellular location is the plastid. It is found in the chloroplast thylakoid membrane. In terms of biological role, may play a role in photosystem I and II biogenesis. The protein is Protein PsbN of Nelumbo lutea (American lotus).